We begin with the raw amino-acid sequence, 323 residues long: Acetyl esterase (323 aa).

Positions 91-93 (HGG) match the Involved in the stabilization of the negatively charged intermediate by the formation of the oxyanion hole motif. Catalysis depends on residues S165, D262, and H292.

Belongs to the 'GDXG' lipolytic enzyme family. Homodimer. Interacts with MalT and MelA.

It localises to the cytoplasm. Functionally, displays esterase activity towards short chain fatty esters (acyl chain length of up to 8 carbons). Able to hydrolyze triacetylglycerol (triacetin) and tributyrylglycerol (tributyrin), but not trioleylglycerol (triolein) or cholesterol oleate. Negatively regulates MalT activity by antagonizing maltotriose binding. Inhibits MelA galactosidase activity. In Salmonella agona (strain SL483), this protein is Acetyl esterase.